The sequence spans 235 residues: Ion-translocating oxidoreductase complex subunit E (235 aa).

A run of 5 helical transmembrane segments spans residues 63–83 (LGLG…ISLF), 93–113 (IPIY…LMNA), 117–137 (TLYQ…IIIG), 152–172 (IWDG…LGAL), and 206–226 (SFLL…LLAI).

The protein belongs to the NqrDE/RnfAE family. In terms of assembly, the complex is composed of six subunits: RnfA, RnfB, RnfC, RnfD, RnfE and RnfG.

It localises to the cell inner membrane. Functionally, part of a membrane-bound complex that couples electron transfer with translocation of ions across the membrane. This is Ion-translocating oxidoreductase complex subunit E from Haemophilus influenzae (strain 86-028NP).